The sequence spans 510 residues: NAD(P)H-quinone oxidoreductase subunit 2 A, chloroplastic (510 aa).

13 helical membrane-spanning segments follow: residues 24–44, 57–77, 99–119, 124–144, 149–169, 183–203, 227–247, 295–315, 323–343, 354–374, 395–415, 418–438, and 484–504; these read LLLF…GLIL, IPWL…ALLF, IFQF…VEYI, MAIT…MFLC, LITI…LSGY, YLLM…WLYG, PGIS…LSPA, WHLL…LIAI, MLAY…IVGD, YMLF…LFGL, ALSL…AGFF, LYLF…IGLL, and MIVC…IIAI.

This sequence belongs to the complex I subunit 2 family. NDH is composed of at least 16 different subunits, 5 of which are encoded in the nucleus.

The protein localises to the plastid. It is found in the chloroplast thylakoid membrane. The catalysed reaction is a plastoquinone + NADH + (n+1) H(+)(in) = a plastoquinol + NAD(+) + n H(+)(out). It catalyses the reaction a plastoquinone + NADPH + (n+1) H(+)(in) = a plastoquinol + NADP(+) + n H(+)(out). Functionally, NDH shuttles electrons from NAD(P)H:plastoquinone, via FMN and iron-sulfur (Fe-S) centers, to quinones in the photosynthetic chain and possibly in a chloroplast respiratory chain. The immediate electron acceptor for the enzyme in this species is believed to be plastoquinone. Couples the redox reaction to proton translocation, and thus conserves the redox energy in a proton gradient. This is NAD(P)H-quinone oxidoreductase subunit 2 A, chloroplastic from Solanum bulbocastanum (Wild potato).